We begin with the raw amino-acid sequence, 138 residues long: Putative pre-16S rRNA nuclease (138 aa).

It belongs to the YqgF nuclease family.

It is found in the cytoplasm. In terms of biological role, could be a nuclease involved in processing of the 5'-end of pre-16S rRNA. The polypeptide is Putative pre-16S rRNA nuclease (Fusobacterium nucleatum subsp. nucleatum (strain ATCC 25586 / DSM 15643 / BCRC 10681 / CIP 101130 / JCM 8532 / KCTC 2640 / LMG 13131 / VPI 4355)).